We begin with the raw amino-acid sequence, 94 residues long: Citrate lyase acyl carrier protein (94 aa).

An O-(phosphoribosyl dephospho-coenzyme A)serine modification is found at Ser-14.

Belongs to the CitD family. Oligomer with a subunit composition of (alpha,beta,gamma)6.

The protein localises to the cytoplasm. Covalent carrier of the coenzyme of citrate lyase. This Fusobacterium nucleatum subsp. nucleatum (strain ATCC 25586 / DSM 15643 / BCRC 10681 / CIP 101130 / JCM 8532 / KCTC 2640 / LMG 13131 / VPI 4355) protein is Citrate lyase acyl carrier protein.